Here is a 234-residue protein sequence, read N- to C-terminus: Adenylate dimethylallyltransferase (234 aa).

This sequence belongs to the isopentenyl transferase family.

The enzyme catalyses dimethylallyl diphosphate + AMP = N(6)-(dimethylallyl)adenosine 5'-phosphate + diphosphate. Transfers dimethylallyl groups to AMP as part of the biosynthesis of cytokinin phytohormones. The chain is Adenylate dimethylallyltransferase (ptz) from Pseudomonas savastanoi (Pseudomonas syringae pv. savastanoi).